A 236-amino-acid chain; its full sequence is Phosphoribosylaminoimidazole-succinocarboxamide synthase (236 aa).

It belongs to the SAICAR synthetase family.

It catalyses the reaction 5-amino-1-(5-phospho-D-ribosyl)imidazole-4-carboxylate + L-aspartate + ATP = (2S)-2-[5-amino-1-(5-phospho-beta-D-ribosyl)imidazole-4-carboxamido]succinate + ADP + phosphate + 2 H(+). Its pathway is purine metabolism; IMP biosynthesis via de novo pathway; 5-amino-1-(5-phospho-D-ribosyl)imidazole-4-carboxamide from 5-amino-1-(5-phospho-D-ribosyl)imidazole-4-carboxylate: step 1/2. This chain is Phosphoribosylaminoimidazole-succinocarboxamide synthase, found in Pseudomonas syringae pv. tomato (strain ATCC BAA-871 / DC3000).